A 218-amino-acid polypeptide reads, in one-letter code: Adenylate kinase (218 aa).

10 to 15 contributes to the ATP binding site; it reads GAGKGT. The interval 30–59 is NMP; sequence STGDMLRAAVKAGTPLGLEAKKVMDAGGLV. Residues Thr-31, Arg-36, 57–59, 85–88, and Gln-92 each bind AMP; these read GLV and GFPR. The segment at 122-159 is LID; that stretch reads ERRVHPASGRSYHVRFNPPKAEGVDDVTGEPLVQRDDD. ATP is bound by residues Arg-123 and 132–133; that span reads SY. The AMP site is built by Arg-156 and Arg-167. Gly-203 contributes to the ATP binding site.

It belongs to the adenylate kinase family. Monomer.

The protein resides in the cytoplasm. It catalyses the reaction AMP + ATP = 2 ADP. It functions in the pathway purine metabolism; AMP biosynthesis via salvage pathway; AMP from ADP: step 1/1. Its function is as follows. Catalyzes the reversible transfer of the terminal phosphate group between ATP and AMP. Plays an important role in cellular energy homeostasis and in adenine nucleotide metabolism. This Bordetella pertussis (strain Tohama I / ATCC BAA-589 / NCTC 13251) protein is Adenylate kinase.